We begin with the raw amino-acid sequence, 305 residues long: tRNA pseudouridine synthase B (305 aa).

Residue Asp39 is the Nucleophile of the active site.

It belongs to the pseudouridine synthase TruB family. Type 1 subfamily.

It catalyses the reaction uridine(55) in tRNA = pseudouridine(55) in tRNA. Responsible for synthesis of pseudouridine from uracil-55 in the psi GC loop of transfer RNAs. The chain is tRNA pseudouridine synthase B from Staphylococcus aureus (strain MW2).